Reading from the N-terminus, the 337-residue chain is uncharacterized protein (337 aa).

The next 2 helical transmembrane spans lie at 4–24 (FIFF…FSLI) and 26–46 (LLLW…LFVL).

This sequence belongs to the plectrovirus ORF2 family.

Its subcellular location is the host membrane. This is an uncharacterized protein from Spiroplasma virus SpV1-R8A2 B (SpV1).